Reading from the N-terminus, the 310-residue chain is Ribosomal RNA small subunit methyltransferase H (310 aa).

Residues 35–37 (GGH), D52, F79, D100, and Q107 each bind S-adenosyl-L-methionine.

This sequence belongs to the methyltransferase superfamily. RsmH family.

The protein localises to the cytoplasm. The catalysed reaction is cytidine(1402) in 16S rRNA + S-adenosyl-L-methionine = N(4)-methylcytidine(1402) in 16S rRNA + S-adenosyl-L-homocysteine + H(+). In terms of biological role, specifically methylates the N4 position of cytidine in position 1402 (C1402) of 16S rRNA. This is Ribosomal RNA small subunit methyltransferase H from Anaeromyxobacter dehalogenans (strain 2CP-1 / ATCC BAA-258).